The primary structure comprises 409 residues: Arginine deiminase (409 aa).

The Amidino-cysteine intermediate role is filled by C399.

Belongs to the arginine deiminase family.

Its subcellular location is the cytoplasm. The enzyme catalyses L-arginine + H2O = L-citrulline + NH4(+). The protein operates within amino-acid degradation; L-arginine degradation via ADI pathway; carbamoyl phosphate from L-arginine: step 1/2. This chain is Arginine deiminase, found in Streptococcus pneumoniae (strain 70585).